The primary structure comprises 560 residues: Dihydroxy-acid dehydratase (560 aa).

Mg(2+) is bound at residue Asp78. Cys119 is a [2Fe-2S] cluster binding site. Positions 120 and 121 each coordinate Mg(2+). Residue Lys121 is modified to N6-carboxylysine. Residue Cys192 coordinates [2Fe-2S] cluster. Glu446 lines the Mg(2+) pocket. The Proton acceptor role is filled by Ser472.

This sequence belongs to the IlvD/Edd family. In terms of assembly, homodimer. It depends on [2Fe-2S] cluster as a cofactor. Mg(2+) is required as a cofactor.

It catalyses the reaction (2R)-2,3-dihydroxy-3-methylbutanoate = 3-methyl-2-oxobutanoate + H2O. It carries out the reaction (2R,3R)-2,3-dihydroxy-3-methylpentanoate = (S)-3-methyl-2-oxopentanoate + H2O. It participates in amino-acid biosynthesis; L-isoleucine biosynthesis; L-isoleucine from 2-oxobutanoate: step 3/4. The protein operates within amino-acid biosynthesis; L-valine biosynthesis; L-valine from pyruvate: step 3/4. Functionally, functions in the biosynthesis of branched-chain amino acids. Catalyzes the dehydration of (2R,3R)-2,3-dihydroxy-3-methylpentanoate (2,3-dihydroxy-3-methylvalerate) into 2-oxo-3-methylpentanoate (2-oxo-3-methylvalerate) and of (2R)-2,3-dihydroxy-3-methylbutanoate (2,3-dihydroxyisovalerate) into 2-oxo-3-methylbutanoate (2-oxoisovalerate), the penultimate precursor to L-isoleucine and L-valine, respectively. The chain is Dihydroxy-acid dehydratase from Anaeromyxobacter dehalogenans (strain 2CP-C).